The sequence spans 345 residues: MLRNIIRFKGFGKGTSGGFLKPVSFRVQLTRCYRYDNGPSYRRFNNGEYSQKSSFKSILLDKSSRKYLALLFGGCSLFYYTHLDKAPVSDRSRFIWVSRPLELTIGNYTYKSIWRQTQQEILPPQHPLSIKIENIFMKIVEAAYKDPSVDNSLLDGIKWEIHVVNDPTASPNAFVLPGGKVFIFSSILPICANDDGIATVLAHEFAHQLARHTAENLSKAPIYSLLGLVLYTVTGAHAINNILLDGFLRMPASRQMETEADYIGLMIMSRACFQPQESIKVWERMANFEKQMNRGGVVNMEFLSTHPASTRRIENMSKWLPKANEIYEQSDCSSMGNYYKSFFSM.

The Mitochondrial matrix portion of the chain corresponds to Met-1–Tyr-67. The chain crosses the membrane as a helical span at residues Leu-68 to Val-88. Over Ser-89–Met-345 the chain is Mitochondrial intermembrane. Zn(2+) is bound at residue His-203. Glu-204 is a catalytic residue. 2 residues coordinate Zn(2+): His-207 and Glu-257. A disulfide bridge links Cys-272 with Cys-332. The required for protease activation stretch occupies residues Glu-314–Met-345.

This sequence belongs to the peptidase M48 family. In terms of assembly, homooligomer. Zn(2+) serves as cofactor. Forms a redox-dependent disulfide bond, which plays a structural role and regulates its conformational stability and activity.

The protein resides in the mitochondrion inner membrane. Protease activity is induced in response to various mitochondrial stress, such as changes in membrane potential, oxidative stress or chronic hyperpolarization, and depends on its C-terminal region. Protease that is part of the quality control system in the inner membrane of mitochondria. Activated in response to various mitochondrial stress, leading to the proteolytic cleavage of target proteins, such as OXA1 and COX1. Cleaves and thereby promotes the turnover of mistranslated or misfolded membrane proteins. Cleaves the misfolded multi-pass membrane protein OXA1. Involved in quality control of cytochrome oxidase assembly: mediates the cleavage of COX1 in cells lacking COA2. Required for the stability of the respiratory supercomplexes. Required for TOR signaling. The chain is Mitochondrial metalloendopeptidase OMA1 from Saccharomyces cerevisiae (strain ATCC 204508 / S288c) (Baker's yeast).